Reading from the N-terminus, the 223-residue chain is RNA pyrophosphohydrolase (223 aa).

The region spanning 6 to 149 (GFRPNVGIIL…KRGVYEMALT (144 aa)) is the Nudix hydrolase domain. A Nudix box motif is present at residues 38 to 59 (GGIDRGESPEQAMFRELHEEVG). The disordered stretch occupies residues 175-223 (ERHMPDGGAPAGLDLPPGGSFDPHPDITSASDDPSPPPHNKAPFLPSQR). The span at 180–193 (DGGAPAGLDLPPGG) shows a compositional bias: low complexity.

This sequence belongs to the Nudix hydrolase family. RppH subfamily. The cofactor is a divalent metal cation.

Its function is as follows. Accelerates the degradation of transcripts by removing pyrophosphate from the 5'-end of triphosphorylated RNA, leading to a more labile monophosphorylated state that can stimulate subsequent ribonuclease cleavage. The polypeptide is RNA pyrophosphohydrolase (Variovorax paradoxus (strain S110)).